We begin with the raw amino-acid sequence, 97 residues long: Large ribosomal subunit protein eL21 (97 aa).

It belongs to the eukaryotic ribosomal protein eL21 family.

The sequence is that of Large ribosomal subunit protein eL21 from Methanoculleus marisnigri (strain ATCC 35101 / DSM 1498 / JR1).